Reading from the N-terminus, the 326-residue chain is MSNGYEDHMAEDCRDDIGRTNLIVNYLPQNMTQEELRSLFSSIGEVESAKLIRDKVAGHSLGYGFVNYVTAKDAERAISTLNGLRLQSKTIKVSYARPSSEVIKDANLYISGLPRTMTQKDVEDMFSRFGRIINSRVLVDQTTGLSRGVAFIRFDKRSEAEEAITSFNGHKPPGSSEPITVKFAANPNQNKNMALLSQLYHSPARRFGGPVHHQAQRFRFSPMGVDHMSGISGVNVPGNASSGWCIFIYNLGQDADEGILWQMFGPFGAVTNVKVIRDFNTNKCKGFGFVTMTNYEEAAMAIASLNGYRLGDKILQVSFKTNKSHK.

N-acetylserine is present on Ser-2. Ser-2 carries the post-translational modification Phosphoserine. One can recognise an RRM 1 domain in the interval 20-98 (TNLIVNYLPQ…KTIKVSYARP (79 aa)). 2 positions are modified to phosphoserine: Ser-100 and Ser-158. The RRM 2 domain occupies 106–186 (ANLYISGLPR…EPITVKFAAN (81 aa)). A Glycyl lysine isopeptide (Lys-Gly) (interchain with G-Cter in SUMO2) cross-link involves residue Lys-191. A phosphoserine mark is found at Ser-197 and Ser-202. Arg-206 carries the post-translational modification Omega-N-methylarginine. The residue at position 217 (Arg-217) is an Asymmetric dimethylarginine; by CARM1; alternate. At Arg-217 the chain carries Omega-N-methylarginine; alternate. Phosphoserine occurs at positions 221 and 318. The region spanning 244–322 (WCIFIYNLGQ…KILQVSFKTN (79 aa)) is the RRM 3 domain.

This sequence belongs to the RRM elav family. Monomer and homodimer (in vitro). Interacts with ANP32A. Interacts with ZNF385A; the interaction is indirect and mRNA-dependent and may regulate p53/TP53 expression. Identified in a mRNP complex, at least composed of DHX9, DDX3X, ELAVL1, HNRNPU, IGF2BP1, ILF3, PABPC1, PCBP2, PTBP2, STAU1, STAU2, SYNCRIP and YBX1. Interacts with AGO1 and AGO2. Interacts with IGF2BP1. Interacts with IGF2BP2 and IGF2BP3. Interacts with HNRNPL. Interacts with DHX36; this interaction occurs in a RNA-dependent manner. Interacts with ILF3; this interaction occurs in a RNA-dependent manner. Interacts with PLEKHN1. Interacts with SHFL; the interaction increases in presence of RNA. Interacts with YBX1; interaction recruits ELAVL1 on C5-methylcytosine (m5C)-containing mRNAs, thereby promoting mRNA stability. Interacts with FXR1. In terms of processing, phosphorylated by MAPKAPK2. Phosphorylated by PRKCD. Methylated at Arg-217 by CARM1 in T-cells in response to LPS challenge.

The protein localises to the cytoplasm. It is found in the nucleus. Its subcellular location is the stress granule. It localises to the P-body. Its function is as follows. RNA-binding protein that binds to the 3'-UTR region of mRNAs and increases their stability. Involved in embryonic stem cell (ESC) differentiation: preferentially binds mRNAs that are not methylated by N6-methyladenosine (m6A), stabilizing them, promoting ESC differentiation. Has also been shown to be capable of binding to m6A-containing mRNAs and contributes to MYC stability by binding to m6A-containing MYC mRNAs. Binds to poly-U elements and AU-rich elements (AREs) in the 3'-UTR of target mRNAs. Binds avidly to the AU-rich element in FOS and IL3/interleukin-3 mRNAs. In the case of the FOS AU-rich element, binds to a core element of 27 nucleotides that contain AUUUA, AUUUUA, and AUUUUUA motifs. Binds preferentially to the 5'-UUUU[AG]UUU-3' motif in vitro. With ZNF385A, binds the 3'-UTR of p53/TP53 mRNA to control their nuclear export induced by CDKN2A. Hence, may regulate p53/TP53 expression and mediate in part the CDKN2A anti-proliferative activity. May also bind with ZNF385A the CCNB1 mRNA. Increases the stability of the leptin mRNA harboring an AU-rich element (ARE) in its 3' UTR. In Mus musculus (Mouse), this protein is ELAV-like protein 1 (Elavl1).